The following is a 749-amino-acid chain: MTNSQYSPQPMAAEFSEAMEKLVNACYSDPFRVLGPHPYQKGIVVRAYLPHAIQAWIGTEPPQEMARSSAINLFEWHGKAKALPLPYQVLWEDKMGFTHYEYDPYCFPPQLSDYDLHLFGEGKHWHVYRILGSHPVIVDGTSGVLFATWAPEAERVSIVGDFNRWDGRCHPMQLRGLTGVWELFIPGLKPGTLYKYELRNRNRGSIHLKSDPYGQRFEQRPHTASIVAAKTNYLWQDRKWMEQRKQFDWLHQPISVYEVHLGSWQRGENGAFLNYRQLARQLVDYVLKTGFTHIELLPVTEHPLDASWGYQTTGYFAPTSRFGSPDEFRYFVDHCHLHGIGVLMDWVPGHFPKDAHGLAQFDGSALYEHEDPRLGEHRDWGTLIFNYGRHEVRNFLLSSALYWLEEFHIDGLRVDAVASMLYLDYSRQEGDWIPNKYGGRENLEAIDFLRELNKVLHAQHPGVLVIAEESTSWPMVSHPIYVGGLGFSMKWNMGWMNDTLSYMSKDPIYRHYHHDALTFGLLYAFNENFMLPLSHDEVVHGKQSLLYKMPGDEWQRFANLRLLYTMMFTYPGKKLLFMGCEFGQGEEWNESRSLDWYLLNYPVHQGVQAAIKDLNHLYRSLPALNYYDFAKEGFEWIDCHDSAQSVLSYLRLKDGDFVIVVLNFTPVPRTNYRLGVPKSGVYLECFNSDSTYYGGSNMGNSQTIQTDSITWMGRPYSINITVPPLAGIVLRLKTPASKMPATAPLSPGK.

D415 acts as the Nucleophile in catalysis. Residue E468 is the Proton donor of the active site.

It belongs to the glycosyl hydrolase 13 family. GlgB subfamily. Monomer.

The catalysed reaction is Transfers a segment of a (1-&gt;4)-alpha-D-glucan chain to a primary hydroxy group in a similar glucan chain.. It functions in the pathway glycan biosynthesis; glycogen biosynthesis. In terms of biological role, catalyzes the formation of the alpha-1,6-glucosidic linkages in glycogen by scission of a 1,4-alpha-linked oligosaccharide from growing alpha-1,4-glucan chains and the subsequent attachment of the oligosaccharide to the alpha-1,6 position. This Nitrosococcus oceani (strain ATCC 19707 / BCRC 17464 / JCM 30415 / NCIMB 11848 / C-107) protein is 1,4-alpha-glucan branching enzyme GlgB.